The chain runs to 367 residues: MSVNRILVINPGSTSTKIGVFDNERPVLEETIRHDVEQIGKYKRIIDQYEFRKETILEVLHSHGINISKLNAVCGRGGLLRPIEGGTYTVNDAMLEDLKNGFSGHHASNLGGILAYEIASGLNIPAFIVDPVVVDEMEPVARISGIAGMERKSIFHALNQKAVARKVAEQLNHKYEDLNLLVTHMGGGITVGAHKKGRVIDVNNGLNGEGPFSPERAGTVPVGQLVEMCFSGEYYRDEMIKKLVGQGGLVSLIGTNDAIKVEQMVEKGDPEATLIYKAMAYQVAKEIGGASAVLHGKIDAIVLTGGLAYSKILVDEIKERVDWIADVIVHPGEDELEALAEGALRVLREEEAPKEYVVREKETVARG.

It belongs to the acetokinase family.

It localises to the cytoplasm. The catalysed reaction is butanoate + ATP = butanoyl phosphate + ADP. The polypeptide is Probable butyrate kinase (Bacillus cereus (strain ATCC 14579 / DSM 31 / CCUG 7414 / JCM 2152 / NBRC 15305 / NCIMB 9373 / NCTC 2599 / NRRL B-3711)).